Here is a 318-residue protein sequence, read N- to C-terminus: uncharacterized protein (318 aa).

This is an uncharacterized protein from Ictaluridae (bullhead catfishes).